The following is a 345-amino-acid chain: MSTPPPKLLRALAGETLERPPIWFMRQAGRSLPEYRELRSRAKDFIAFCLDPEMAAEATLQPMRRFPMDGAIVFADILLIPLALGQDVWFEAGEGPKLGELPPIEALRDQVEASTGRLSAVGETLARVRAELEPDRALIGFAGAPWTVATYMLERKGSEREAARAYAYAHPDELDALLDVLVDATARYLVMQAKAGAQALKLFESWAESLSEDVFERIVVRPHAAIVEKVRAAGVTVPIIGFPRGAGAQVETYAEGVPVEGIALDVQATAALGRRLQAQGRCIQGALDNLLLREGGPALDARVDQLLAQWGDGPWIFNLGHGVLPDTPIENIARVVSRVTGKPVR.

Substrate contacts are provided by residues 26–30 (RQAGR), aspartate 76, tyrosine 151, serine 205, and histidine 321.

This sequence belongs to the uroporphyrinogen decarboxylase family. In terms of assembly, homodimer.

It is found in the cytoplasm. The enzyme catalyses uroporphyrinogen III + 4 H(+) = coproporphyrinogen III + 4 CO2. It functions in the pathway porphyrin-containing compound metabolism; protoporphyrin-IX biosynthesis; coproporphyrinogen-III from 5-aminolevulinate: step 4/4. Functionally, catalyzes the decarboxylation of four acetate groups of uroporphyrinogen-III to yield coproporphyrinogen-III. This is Uroporphyrinogen decarboxylase from Phenylobacterium zucineum (strain HLK1).